The chain runs to 99 residues: Large ribosomal subunit protein bL21 (99 aa).

Belongs to the bacterial ribosomal protein bL21 family. As to quaternary structure, part of the 50S ribosomal subunit. Contacts protein L20.

In terms of biological role, this protein binds to 23S rRNA in the presence of protein L20. The protein is Large ribosomal subunit protein bL21 of Mycoplasma mobile (strain ATCC 43663 / 163K / NCTC 11711) (Mesomycoplasma mobile).